Reading from the N-terminus, the 355-residue chain is 3-dehydroquinate synthase (355 aa).

Residues 98–102, 122–123, Lys-135, Lys-144, and 162–165 contribute to the NAD(+) site; these read GVIGD, TT, and TLNT. Zn(2+)-binding residues include Glu-177, His-240, and His-257.

It belongs to the sugar phosphate cyclases superfamily. Dehydroquinate synthase family. It depends on Co(2+) as a cofactor. Zn(2+) is required as a cofactor. Requires NAD(+) as cofactor.

Its subcellular location is the cytoplasm. It carries out the reaction 7-phospho-2-dehydro-3-deoxy-D-arabino-heptonate = 3-dehydroquinate + phosphate. The protein operates within metabolic intermediate biosynthesis; chorismate biosynthesis; chorismate from D-erythrose 4-phosphate and phosphoenolpyruvate: step 2/7. Its function is as follows. Catalyzes the conversion of 3-deoxy-D-arabino-heptulosonate 7-phosphate (DAHP) to dehydroquinate (DHQ). This is 3-dehydroquinate synthase from Dictyoglomus thermophilum (strain ATCC 35947 / DSM 3960 / H-6-12).